Consider the following 214-residue polypeptide: Acyl-homoserine-lactone synthase (214 aa).

Belongs to the autoinducer synthase family.

It catalyses the reaction a fatty acyl-[ACP] + S-adenosyl-L-methionine = an N-acyl-L-homoserine lactone + S-methyl-5'-thioadenosine + holo-[ACP] + H(+). Its function is as follows. Required for the synthesis of autoinducer molecules such as OHHL (N-(3-oxohexanoyl)-L-homoserine lactone), and HHL (N-hexanoyl-L-homoserine lactone). The polypeptide is Acyl-homoserine-lactone synthase (yenI) (Yersinia enterocolitica).